The following is a 578-amino-acid chain: Membrane protein insertase YidC (578 aa).

Residues 7–27 (FLAIAISLGILLGFQGLYRHF) traverse the membrane as a helical segment. A disordered region spans residues 35 to 70 (ARTATNAGQGKPNNTLGAVPTDATASQSPPPKEGAR). Over residues 37 to 50 (TATNAGQGKPNNTL) the composition is skewed to polar residues. The next 4 membrane-spanning stretches (helical) occupy residues 362–382 (LVGN…AAFY), 436–456 (LPML…FVTI), 491–511 (HISP…TMYL), and 530–550 (FMPI…VIYW).

The protein belongs to the OXA1/ALB3/YidC family. Type 1 subfamily. Interacts with the Sec translocase complex via SecD. Specifically interacts with transmembrane segments of nascent integral membrane proteins during membrane integration.

The protein resides in the cell inner membrane. Its function is as follows. Required for the insertion and/or proper folding and/or complex formation of integral membrane proteins into the membrane. Involved in integration of membrane proteins that insert both dependently and independently of the Sec translocase complex, as well as at least some lipoproteins. Aids folding of multispanning membrane proteins. This chain is Membrane protein insertase YidC, found in Granulibacter bethesdensis (strain ATCC BAA-1260 / CGDNIH1).